The chain runs to 819 residues: MWGLVRLLLAWLGGWGCMGRLAAPARAWAGSREHPGPALLRTRRSWVWNQFFVIEEYAGPEPVLIGKLHSDVDRGEGRTKYLLTGEGAGTVFVIDEATGNIHVTKSLDREEKAQYVLLAQAVDRASNRPLEPPSEFIIKVQDINDNPPIFPLGPYHATVPEMSNVGTSVIQVTAHDADDPSYGNSAKLVYTVLDGLPFFSVDPQTGVVRTAIPNMDRETQEEFLVVIQAKDMGGHMGGLSGSTTVTVTLSDVNDNPPKFPQSLYQFSVVETAGPGTLVGRLRAQDPDLGDNALMAYSILDGEGSEAFSISTDLQGRDGLLTVRKPLDFESQRSYSFRVEATNTLIDPAYLRRGPFKDVASVRVAVQDAPEPPAFTQAAYHLTVPENKAPGTLVGQISAADLDSPASPIRYSILPHSDPERCFSIQPEEGTIHTAAPLDREARAWHNLTVLATELGWSWGPERGWVPLLVAEWSAPAAPPQRSPVGSAVGIPQDSSAQASRVQVAIQTLDENDNAPQLAEPYDTFVCDSAAPGQLIQVIRALDRDEVGNSSHVSFQGPLGPDANFTVQDNRDGSASLLLPSRPAPPRHAPYLVPIELWDWGQPALSSTATVTVSVCRCQPDGSVASCWPEAHLSAAGLSTGALLAIITCVGALLALVVLFVALRRQKQEALMVLEEEDVRENIITYDDEGGGEEDTEAFDITALQNPDGAAPPAPGPPARRDVLPRARVSRQPRPPGPADVAQLLALRLREADEDPGVPPYDSVQVYGYEGRGSSCGSLSSLGSGSEAGGAPGPAEPLDDWGPLFRTLAELYGAKEPPAP.

The first 19 residues, 1 to 19 (MWGLVRLLLAWLGGWGCMG), serve as a signal peptide directing secretion. The propeptide occupies 21-44 (LAAPARAWAGSREHPGPALLRTRR). Over 45-641 (SWVWNQFFVI…LSAAGLSTGA (597 aa)) the chain is Extracellular. Cadherin domains are found at residues 46–150 (WVWN…PPIF), 151–259 (PLGP…PPKF), 260–374 (PQSL…PPAF), 375–517 (TQAA…APQL), and 517–630 (LAEP…WPEA). 3 N-linked (GlcNAc...) asparagine glycosylation sites follow: Asn446, Asn548, and Asn563. The helical transmembrane segment at 642–662 (LLAIITCVGALLALVVLFVAL) threads the bilayer. At 663–819 (RRQKQEALMV…LYGAKEPPAP (157 aa)) the chain is on the cytoplasmic side. Residues 768 to 800 (YEGRGSSCGSLSSLGSGSEAGGAPGPAEPLDDW) are disordered. Positions 771–784 (RGSSCGSLSSLGSG) are enriched in low complexity.

In terms of assembly, associates with alpha-, beta- and delta-catenins.

Its subcellular location is the cell membrane. Functionally, cadherins are calcium-dependent cell adhesion proteins. They preferentially interact with themselves in a homophilic manner in connecting cells; cadherins may thus contribute to the sorting of heterogeneous cell types. Cadherin-24 mediate strong cell-cell adhesion. This chain is Cadherin-24 (CDH24), found in Homo sapiens (Human).